The primary structure comprises 426 residues: Serine--tRNA ligase (426 aa).

Residues Arg37–Ala63 form a disordered region. Thr233–Glu235 serves as a coordination point for L-serine. Arg264–Glu266 is an ATP binding site. Position 287 (Glu287) interacts with L-serine. Glu351–Ser354 provides a ligand contact to ATP. Residue Ser387 participates in L-serine binding.

This sequence belongs to the class-II aminoacyl-tRNA synthetase family. Type-1 seryl-tRNA synthetase subfamily. In terms of assembly, homodimer. The tRNA molecule binds across the dimer.

The protein localises to the cytoplasm. It carries out the reaction tRNA(Ser) + L-serine + ATP = L-seryl-tRNA(Ser) + AMP + diphosphate + H(+). It catalyses the reaction tRNA(Sec) + L-serine + ATP = L-seryl-tRNA(Sec) + AMP + diphosphate + H(+). It functions in the pathway aminoacyl-tRNA biosynthesis; selenocysteinyl-tRNA(Sec) biosynthesis; L-seryl-tRNA(Sec) from L-serine and tRNA(Sec): step 1/1. In terms of biological role, catalyzes the attachment of serine to tRNA(Ser). Is also able to aminoacylate tRNA(Sec) with serine, to form the misacylated tRNA L-seryl-tRNA(Sec), which will be further converted into selenocysteinyl-tRNA(Sec). In Pseudomonas entomophila (strain L48), this protein is Serine--tRNA ligase.